The primary structure comprises 105 residues: Putative membrane protein insertion efficiency factor (105 aa).

The interval 68-105 (FHPGGLDPVPPRRNESGTEISDARPGSDGEASPGAPGL) is disordered. Positions 77–94 (PPRRNESGTEISDARPGS) are enriched in basic and acidic residues.

It belongs to the UPF0161 family.

It localises to the cell membrane. In terms of biological role, could be involved in insertion of integral membrane proteins into the membrane. This chain is Putative membrane protein insertion efficiency factor, found in Thermobifida fusca (strain YX).